Here is a 24-residue protein sequence, read N- to C-terminus: Potassium channel toxin alpha-KTx 6 OcyKTx5 (24 aa).

Cysteines 3 and 24 form a disulfide.

The protein belongs to the short scorpion toxin superfamily. Potassium channel inhibitor family. Alpha-KTx 06 subfamily. In terms of tissue distribution, expressed by the venom gland.

The protein localises to the secreted. Blocks voltage-gated potassium channels. The protein is Potassium channel toxin alpha-KTx 6 OcyKTx5 of Opisthacanthus cayaporum (South American scorpion).